Consider the following 1027-residue polypeptide: Abnormal embryogenesis protein 30 (1027 aa).

WD repeat units lie at residues 18 to 65 and 70 to 109; these read RTPF…IQAV and KLDS…VRFS. Disordered regions lie at residues 619-655 and 1005-1027; these read NDSS…ACDL and AMDS…DDDI. 2 stretches are compositionally biased toward acidic residues: residues 625-647 and 1014-1027; these read LEED…EPEG and DNGE…DDDI.

The protein belongs to the APC4 family. In terms of assembly, the APC/C is probably composed of at least 12 subunits: apc-2, apc-10, apc-11, cdc-26, emb-1, emb-27, emb-30, mat-1, mat-2, mat-3, such-1 and gfi-3.

Its pathway is protein modification; protein ubiquitination. Its function is as follows. Probable component of the anaphase promoting complex/cyclosome (APC/C), a cell cycle-regulated E3 ubiquitin ligase that controls progression through mitosis and the G1 phase of the cell cycle. The APC/C complex acts by mediating ubiquitination and subsequent degradation of target proteins. Developmental role in early embryogenesis and the metaphase to anaphase transition in oocyte and spermatocyte meiosis and mitosis in somatic and germ cells. Required for embryonic anterior-posterior axis formation. Negatively regulates ify-1 protein levels during meiosis I. Plays a role in regulating the abundance of glr-1 receptors in postmitotic neurons, which may in turn control animal locomotion. Involved in regulating GABA neurotransmitter release at neuromuscular junctions in GABA motor neurons. This chain is Abnormal embryogenesis protein 30, found in Caenorhabditis elegans.